Reading from the N-terminus, the 87-residue chain is Phospholemman (87 aa).

Residues 1 to 20 (MASLSHILVLWVGILTVVNA) form the signal peptide. Residues 21 to 35 (EAPQEHDPFTYDYQS) lie on the Extracellular side of the membrane. The helical transmembrane segment at 36–56 (LRIGGLIIAGILFILGILIVL) threads the bilayer. At 57-87 (SRRCRCKFNQQQSLGKMRSPHLAAQFSSESC) the chain is on the cytoplasmic side. The S-palmitoyl cysteine moiety is linked to residue C60. An S-glutathionyl cysteine; alternate modification is found at C62. The S-palmitoyl cysteine; alternate moiety is linked to residue C62. S75 is subject to Phosphoserine; by PKA and PKC. S83 carries the phosphoserine; by PKA modification.

This sequence belongs to the FXYD family. In terms of assembly, homotetramer. Monomer. Regulatory subunit of the sodium/potassium-transporting ATPase (NKA) which is composed of a catalytic alpha subunit, a non-catalytic beta subunit and an additional regulatory subunit. The monomeric form associates with NKA while the oligomeric form does not. Interacts with the catalytic alpha-1 subunit ATP1A1. Also interacts with the catalytic alpha-2 and alpha-3 subunits ATP1A2 and ATP1A3. Very little interaction with ATP1A1, ATP1A2 or ATP1A3 when phosphorylated at Ser-83. Interacts with the non-catalytic beta-1 subunit ATP1B1. Oxidative stress decreases interaction with ATP1A1 but increases interaction with ATP1B1. Post-translationally, major plasma membrane substrate for cAMP-dependent protein kinase (PKA) and protein kinase C (PKC) in several different tissues. Phosphorylated in response to insulin and adrenergic stimulation. Phosphorylation at Ser-83 stimulates sodium/potassium-transporting ATPase activity while the unphosphorylated form inhibits sodium/potassium-transporting ATPase activity. Phosphorylation increases tetramerization, decreases binding to ATP1A1 and reduces inhibition of ATP1A1 activity. Phosphorylation at Ser-75 leads to greatly reduced interaction with ATP1A1, ATP1A2 and ATP1A3. May be phosphorylated by DMPK. In terms of processing, palmitoylation increases half-life and stability and is enhanced upon phosphorylation at Ser-83 by PKA.

It is found in the cell membrane. It localises to the sarcolemma. The protein localises to the apical cell membrane. Its subcellular location is the membrane. The protein resides in the caveola. It is found in the T-tubule. Associates with and regulates the activity of the sodium/potassium-transporting ATPase (NKA) which transports Na(+) out of the cell and K(+) into the cell. Inhibits NKA activity in its unphosphorylated state and stimulates activity when phosphorylated. Reduces glutathionylation of the NKA beta-1 subunit ATP1B1, thus reversing glutathionylation-mediated inhibition of ATP1B1. Contributes to female sexual development by maintaining the excitability of neurons which secrete gonadotropin-releasing hormone. The sequence is that of Phospholemman from Sus scrofa (Pig).